Here is a 212-residue protein sequence, read N- to C-terminus: uncharacterized protein (212 aa).

The region spanning 46-198 (LERVYREKRK…IYSLMTRLGI (153 aa)) is the SIS domain.

It belongs to the SIS family. PHI subfamily.

This is an uncharacterized protein from Aeropyrum pernix (strain ATCC 700893 / DSM 11879 / JCM 9820 / NBRC 100138 / K1).